Consider the following 43-residue polypeptide: Bacteriocin weissellin-A (43 aa).

Cysteine 9 and cysteine 14 form a disulfide bridge.

The protein localises to the secreted. In terms of biological role, highly active against Gram-positive bacteria M.flavus strain ATCC 400, M.luteus strain CECT241, C.soprogenes strain NCTC533, L.monocytogenes strain ATCC 19111, L.inocua strain ATCC BAA-680D and S.carnosus strain LMG13564. Less active against B.cereus strain LMG13569, C.thiaminolyticum strain ATCC 15579, E.faecalis strain NCTC8176, L.lactis strain LM0230, L.casei strain ATCC 344, L.lactis strain IL1403, L.jensenii strain ATCC 25258, L.plantarum strain CECT220, L.brevis strain ATCC 8287, L.bulgaricus strain LMG13551, P.acidilactici strain ATCC 25740, P.pentosaceus strain ATCC 33316 and P.pentosaceus strain LMG13560. Weakly active against L.mesenteroides strain ATCC 19254, L.lactis strain ATCC 1454, L.sakei strain CECT906T, L.lactis subsp. cremoris strain MC1363 and L.curvatus strain ATCC 51436. Not active against Gram-negative bacterium S.enteritidis strain ATCC 13076. The mode of action appears to be non-lytic. Inactivated by proteinase K, but insensitive to trypsin, alpha-chymotrypsin, pepsin and papain. The protein is Bacteriocin weissellin-A of Weissella paramesenteroides (Leuconostoc paramesenteroides).